Consider the following 101-residue polypeptide: Small ribosomal subunit protein uS14 (101 aa).

It belongs to the universal ribosomal protein uS14 family. As to quaternary structure, part of the 30S ribosomal subunit. Contacts proteins S3 and S10.

Functionally, binds 16S rRNA, required for the assembly of 30S particles and may also be responsible for determining the conformation of the 16S rRNA at the A site. The protein is Small ribosomal subunit protein uS14 of Blochmanniella floridana.